A 1045-amino-acid polypeptide reads, in one-letter code: Collagen alpha-1(VI) chain (1045 aa).

A signal peptide spans 1 to 24 (MKMLQGRLPLTVLHLFLLLGGGMT). Residues 65–255 (DIFFVLDTSE…LTDDEIDNTI (191 aa)) enclose the VWFA 1 domain. Positions 277-613 (PSRGLSGPSG…GPPGPGGPPG (337 aa)) are disordered. The triple-helical region stretch occupies residues 280 to 540 (GLSGPSGPPG…RGDDGRPGNG (261 aa)). A compositionally biased stretch (low complexity) spans 297–309 (PGLPGDRGLPGDP). Over residues 327-360 (QGIRGEKGGRGAKGSKGDKGKRGIDGVDGQKGED) the composition is skewed to basic and acidic residues. The segment covering 375–392 (DGAPGSSGPKGDPGPYGT) has biased composition (low complexity). Residues 400–409 (GTPGTGGRPG) are compositionally biased toward gly residues. 2 short sequence motifs (cell attachment site) span residues 501–503 (RGD) and 554–556 (RGD). The segment covering 600–613 (EGPPGPPGPGGPPG) has biased composition (pro residues). 2 VWFA domains span residues 638–825 (DLLF…LHNV) and 849–1035 (DITM…YQSI).

This sequence belongs to the type VI collagen family.

Its subcellular location is the secreted. The protein localises to the extracellular space. It localises to the extracellular matrix. Collagen VI acts as a cell-binding protein. In Xenopus laevis (African clawed frog), this protein is Collagen alpha-1(VI) chain (col6a1).